Here is a 127-residue protein sequence, read N- to C-terminus: Serum amyloid A protein (127 aa).

Positions 1 to 18 are cleaved as a signal peptide; the sequence is MKLLTSLFLLSLVLCVNS. Gln-19 is subject to Pyrrolidone carboxylic acid. The tract at residues 89-127 is disordered; that stretch reads GGSSGRGVEDSMADQEANRWGRSGKDPNRYRPKGLDPKY. Positions 104-127 are enriched in basic and acidic residues; sequence EANRWGRSGKDPNRYRPKGLDPKY.

This sequence belongs to the SAA family. Expressed by the liver; secreted in plasma.

It localises to the secreted. In terms of biological role, major acute phase reactant. Apolipoprotein of the HDL complex. This Notamacropus eugenii (Tammar wallaby) protein is Serum amyloid A protein (SAA1).